Reading from the N-terminus, the 585-residue chain is Glutamate decarboxylase (585 aa).

Over residues 35-56 (KSAVQSGHQGSNNMRDTSSQGM) the composition is skewed to polar residues. Residues 35–60 (KSAVQSGHQGSNNMRDTSSQGMANKY) form a disordered region. K318 is subject to N6-(pyridoxal phosphate)lysine.

Belongs to the group II decarboxylase family. Requires pyridoxal 5'-phosphate as cofactor.

The enzyme catalyses L-glutamate + H(+) = 4-aminobutanoate + CO2. This Saccharomyces cerevisiae (strain ATCC 204508 / S288c) (Baker's yeast) protein is Glutamate decarboxylase (GAD1).